Here is a 198-residue protein sequence, read N- to C-terminus: Alkyl hydroperoxide reductase C (198 aa).

The region spanning 2 to 163 (TLVTQKAPNF…MIRMIDALNF (162 aa)) is the Thioredoxin domain. Cys-50 serves as the catalytic Cysteine sulfenic acid (-SOH) intermediate.

Belongs to the peroxiredoxin family. AhpC/Prx1 subfamily. In terms of assembly, homodimer; disulfide-linked, upon oxidation. 5 homodimers assemble to form a ring-like decamer.

It localises to the cytoplasm. The catalysed reaction is a hydroperoxide + NADH + H(+) = an alcohol + NAD(+) + H2O. In terms of biological role, thiol-specific peroxidase that catalyzes the reduction of hydrogen peroxide and organic hydroperoxides to water and alcohols, respectively. Plays a role in cell protection against oxidative stress by detoxifying peroxides. The sequence is that of Alkyl hydroperoxide reductase C from Buchnera aphidicola subsp. Schizaphis graminum (strain Sg).